A 364-amino-acid polypeptide reads, in one-letter code: Aminomethyltransferase (364 aa).

Belongs to the GcvT family. The glycine cleavage system is composed of four proteins: P, T, L and H.

It carries out the reaction N(6)-[(R)-S(8)-aminomethyldihydrolipoyl]-L-lysyl-[protein] + (6S)-5,6,7,8-tetrahydrofolate = N(6)-[(R)-dihydrolipoyl]-L-lysyl-[protein] + (6R)-5,10-methylene-5,6,7,8-tetrahydrofolate + NH4(+). The glycine cleavage system catalyzes the degradation of glycine. The sequence is that of Aminomethyltransferase from Shewanella baltica (strain OS223).